The sequence spans 478 residues: Cytochrome c biogenesis protein CcsB (478 aa).

The next 3 helical transmembrane spans lie at 30–50, 89–109, and 175–195; these read LRLA…GTVI, TSWF…CSLT, and FGPI…IWGS. The tract at residues 453-478 is disordered; the sequence is LSSPPSPAKEPPPAARVGGTESLANG. Pro residues predominate over residues 456 to 466; sequence PPSPAKEPPPA.

This sequence belongs to the Ccs1/CcsB family. As to quaternary structure, may interact with CcsA.

Its subcellular location is the cellular thylakoid membrane. Functionally, required during biogenesis of c-type cytochromes (cytochrome c6 and cytochrome f) at the step of heme attachment. The polypeptide is Cytochrome c biogenesis protein CcsB (Synechococcus sp. (strain JA-3-3Ab) (Cyanobacteria bacterium Yellowstone A-Prime)).